Reading from the N-terminus, the 393-residue chain is Double-stranded RNA-binding protein 5 (393 aa).

2 consecutive DRBM domains span residues 1-70 (MYKN…VLSS) and 87-155 (IYKN…SLKK). 2 disordered regions span residues 220 to 251 (ASSSSSTSTPNQHKNSSFISLIPPPPPPKSSK) and 335 to 371 (NPNLNPSSLSSSVNEFTSSNNSCSVLNTPGLGGQEKK). The span at 347–361 (VNEFTSSNNSCSVLN) shows a compositional bias: polar residues.

In terms of assembly, heterodimer with DRB1, DRB2 or DRB4. Interacts with DCL1 and DCL3. In terms of tissue distribution, expressed in the shoot apical meristem (SAM).

Its function is as follows. Binds double-stranded RNA. May be involved in RNA-mediated silencing. This is Double-stranded RNA-binding protein 5 (DRB5) from Arabidopsis thaliana (Mouse-ear cress).